A 100-amino-acid chain; its full sequence is Integration host factor subunit alpha (100 aa).

A disordered region spans residues 53–72 (FDLRDKRQRPGRNPKTGEEI).

This sequence belongs to the bacterial histone-like protein family. As to quaternary structure, heterodimer of an alpha and a beta chain.

This protein is one of the two subunits of integration host factor, a specific DNA-binding protein that functions in genetic recombination as well as in transcriptional and translational control. In Pseudomonas entomophila (strain L48), this protein is Integration host factor subunit alpha.